The following is a 717-amino-acid chain: Cleavage stimulation factor subunit 3 (717 aa).

At S2 the chain carries N-acetylserine. HAT repeat units follow at residues 45–77 (QPID…AEIK), 79–110 (KNYD…YVRE), 117–152 (SYKE…FLKG), 163–196 (QRIT…YEEG), 221–261 (KEYE…WEKS), 271–303 (LITK…YLEQ), 319–352 (LFSD…YEES), 354–387 (MKYE…FARR), and 458–494 (NEDN…FESN). The segment at 684-705 (VKRPNEDSDEDEEKGAVVPPVH) is disordered. S691 is modified (phosphoserine).

In terms of assembly, homodimer. The CSTF complex is composed of CSTF1 (50 kDa subunit), CSTF2 (64 kDa subunit) and CSTF3 (77 kDa subunit). CSTF3 directly interacts with CSTF1 and CSTF2. Interacts with FIP1L1.

Its subcellular location is the nucleus. Functionally, one of the multiple factors required for polyadenylation and 3'-end cleavage of mammalian pre-mRNAs. The chain is Cleavage stimulation factor subunit 3 (CSTF3) from Pongo abelii (Sumatran orangutan).